The chain runs to 487 residues: Argininosuccinate lyase (487 aa).

It belongs to the lyase 1 family. Argininosuccinate lyase subfamily.

The protein localises to the cytoplasm. The catalysed reaction is 2-(N(omega)-L-arginino)succinate = fumarate + L-arginine. It participates in amino-acid biosynthesis; L-arginine biosynthesis; L-arginine from L-ornithine and carbamoyl phosphate: step 3/3. This is Argininosuccinate lyase from Natranaerobius thermophilus (strain ATCC BAA-1301 / DSM 18059 / JW/NM-WN-LF).